A 154-amino-acid polypeptide reads, in one-letter code: Myoglobin (154 aa).

A Globin domain is found at Gly2–Lys148. Ser4 is subject to Phosphoserine. Nitrite is bound at residue His65. Residue His65 coordinates O2. Residue Thr68 is modified to Phosphothreonine. Position 94 (His94) interacts with heme b.

This sequence belongs to the globin family. In terms of assembly, monomeric.

The protein localises to the cytoplasm. Its subcellular location is the sarcoplasm. It carries out the reaction Fe(III)-heme b-[protein] + nitric oxide + H2O = Fe(II)-heme b-[protein] + nitrite + 2 H(+). The enzyme catalyses H2O2 + AH2 = A + 2 H2O. Functionally, monomeric heme protein which primary function is to store oxygen and facilitate its diffusion within muscle tissues. Reversibly binds oxygen through a pentacoordinated heme iron and enables its timely and efficient release as needed during periods of heightened demand. Depending on the oxidative conditions of tissues and cells, and in addition to its ability to bind oxygen, it also has a nitrite reductase activity whereby it regulates the production of bioactive nitric oxide. Under stress conditions, like hypoxia and anoxia, it also protects cells against reactive oxygen species thanks to its pseudoperoxidase activity. This is Myoglobin from Homo sapiens (Human).